Consider the following 130-residue polypeptide: ESAT-6 secretion system extracellular protein C (130 aa).

It belongs to the EsxC family.

Its subcellular location is the secreted. The polypeptide is ESAT-6 secretion system extracellular protein C (Staphylococcus aureus (strain MSSA476)).